The following is a 196-amino-acid chain: Large ribosomal subunit protein uL18 (196 aa).

Belongs to the universal ribosomal protein uL18 family. As to quaternary structure, part of the 50S ribosomal subunit. Contacts the 5S and 23S rRNAs.

This is one of the proteins that bind and probably mediate the attachment of the 5S RNA into the large ribosomal subunit, where it forms part of the central protuberance. The sequence is that of Large ribosomal subunit protein uL18 from Saccharolobus islandicus (strain L.S.2.15 / Lassen #1) (Sulfolobus islandicus).